The sequence spans 394 residues: Phosphoglycerate kinase (394 aa).

Substrate-binding positions include 21 to 23 (DFN), Arg-36, 59 to 62 (HLGR), Arg-118, and Arg-151. Ser-183 carries the phosphoserine modification. The ATP site is built by Lys-201 and Gly-292. Phosphothreonine is present on Thr-299. ATP-binding positions include Glu-323 and 350–353 (GGDS).

The protein belongs to the phosphoglycerate kinase family. Monomer.

It is found in the cytoplasm. The enzyme catalyses (2R)-3-phosphoglycerate + ATP = (2R)-3-phospho-glyceroyl phosphate + ADP. It functions in the pathway carbohydrate degradation; glycolysis; pyruvate from D-glyceraldehyde 3-phosphate: step 2/5. The sequence is that of Phosphoglycerate kinase from Bacillus mycoides (strain KBAB4) (Bacillus weihenstephanensis).